The following is a 21-amino-acid chain: Peptide PGLa-R6 (21 aa).

Position 21 is a leucine amide (leucine 21).

Expressed by the skin glands.

The protein resides in the secreted. In terms of biological role, antimicrobial peptide. The chain is Peptide PGLa-R6 from Xenopus ruwenzoriensis (Uganda clawed frog).